Reading from the N-terminus, the 432-residue chain is Succinate--CoA ligase [GDP-forming] subunit beta, mitochondrial (432 aa).

The transit peptide at 1–37 directs the protein to the mitochondrion; sequence MASPVAAQAGKLLRALALRPRFLAAGSQAVQLTSRRW. The region spanning 46 to 274 is the ATP-grasp domain; sequence KKLMSDNGVR…NAEFRQKDIF (229 aa). Gln57 is a binding site for GTP. An N6-acetyllysine modification is found at Lys73. Lys78 bears the N6-succinyllysine mark. 90 to 92 is a binding site for GTP; the sequence is GRG. Residues Lys132 and Lys139 each carry the N6-acetyllysine modification. Leu146 is a GTP binding site. At Ser161 the chain carries Phosphoserine. An N6-acetyllysine mark is found at Lys200, Lys218, and Lys227. Residues Asn243 and Asp257 each coordinate Mg(2+). N6-acetyllysine occurs at positions 271 and 291. Residue Asn308 coordinates substrate. An N6-succinyllysine modification is found at Lys338. Lys347 bears the N6-acetyllysine mark. 365-367 provides a ligand contact to substrate; sequence GIV. Residues Lys386 and Lys423 each carry the N6-acetyllysine modification.

The protein belongs to the succinate/malate CoA ligase beta subunit family. GTP-specific subunit beta subfamily. In terms of assembly, heterodimer of an alpha and a beta subunit. The beta subunit determines specificity for GTP. The cofactor is Mg(2+). As to expression, mainly expressed in liver, kidney, heart, spleen and skeletal muscle. Also found in intestine and colon, and in low amounts in lung, brain, prostate, testis and ovary.

It is found in the mitochondrion. The catalysed reaction is GTP + succinate + CoA = succinyl-CoA + GDP + phosphate. The protein operates within carbohydrate metabolism; tricarboxylic acid cycle; succinate from succinyl-CoA (ligase route): step 1/1. GTP-specific succinyl-CoA synthetase functions in the citric acid cycle (TCA), coupling the hydrolysis of succinyl-CoA to the synthesis of GTP and thus represents the only step of substrate-level phosphorylation in the TCA. The beta subunit provides nucleotide specificity of the enzyme and binds the substrate succinate, while the binding sites for coenzyme A and phosphate are found in the alpha subunit. The polypeptide is Succinate--CoA ligase [GDP-forming] subunit beta, mitochondrial (Homo sapiens (Human)).